The sequence spans 703 residues: Pentatricopeptide repeat-containing protein At1g22830 (703 aa).

PPR repeat units follow at residues 82-116 (VLYSSASLLSTCVGFNEFVPGQQLHAHCISSGLEF), 117-147 (DSVLVPKLVTFYSAFNLLDEAQTITENSEIL), 148-182 (HPLPWNVLIGSYIRNKRFQESVSVYKRMMSKGIRA), 183-217 (DEFTYPSVIKACAALLDFAYGRVVHGSIEVSSHRC), 218-248 (NLYVCNALISMYKRFGKVDVARRLFDRMSER), 249-283 (DAVSWNAIINCYTSEEKLGEAFKLLDRMYLSGVEA), 284-318 (SIVTWNTIAGGCLEAGNYIGALNCVVGMRNCNVRI), 319-353 (GSVAMINGLKACSHIGALKWGKVFHCLVIRSCSFS), 356-386 (IDNVRNSLITMYSRCSDLRHAFIVFQQVEAN), 387-421 (SLSTWNSIISGFAYNERSEETSFLLKEMLLSGFHP), 422-452 (NHITLASILPLFARVGNLQHGKEFHCYILRR), 458-488 (CLILWNSLVDMYAKSGEIIAAKRVFDSMRKR), 489-523 (DKVTYTSLIDGYGRLGKGEVALAWFKDMDRSGIKP), 524-554 (DHVTMVAVLSACSHSNLVREGHWLFTKMEHV), and 560-594 (RLEHYSCMVDLYCRAGYLDKARDIFHTIPYEPSSA). The type E motif stretch occupies residues 595–671 (MCATLLKACL…AHEFALMETD (77 aa)). Positions 671 to 703 (DSELDGENNKPMNDDSVINQEQSSDEERLVEVG) are disordered.

This sequence belongs to the PPR family. PCMP-E subfamily.

This is Pentatricopeptide repeat-containing protein At1g22830 (PCMP-E24) from Arabidopsis thaliana (Mouse-ear cress).